The following is a 696-amino-acid chain: MTRTALVTTALPYANGPLHLGHLVGYIQADIWVRARRLRGDKTWFVCADDTHGTPIMLAAEKAGVTPEAFIANIQASHERDFAAFGVTFDHYDSTNSPVNRELTEAFYTKLEAAGHISRRSVAQFYDPAKGMFLPDRYIKGICPNCGSADQYGDNCEVCGATYAPTELKEPKSVISGATPELRDSEHFFFEVGHFDGFLREWLDGDVALPGVKAKLKEWLDAEGGLRAWDISRDAPYFGFQIPGQPGKYFYVWLDAPIGYLCSFKTLCAQMGEDFQAHLAAGTQTELHHFIGKDIVNFHGLFWPAVLHGTGHRAPTRLHVNGYLMVDGAKMSKSRGTFVMARTFLDVGLEPEALRYYFAAKSSGGVDDLDLNLGDFVARVNADLVGKFVNLASRCAGFIGKRFDGKLADALPDPAQYARFVEALAPIREAYERNDPASAIRQTMALADEANKYIDDTKPWVIAKQEGADAQLQSVCTQGLNLFRLLVAALKPILPRTAAEAEAFLSAPMTSWEDVSRPLTCHVIQPYTALFTRIDPKLIDAMTDASKDTMAAPAAPAATTASAEKVAKIDAKAATPANPPASVANPGLIGMDDFAKLDLRIGKVLVCEAVEGSDKLLRFELDAGELGKRQIFSGIRASYGEPETLVGRSVVFIANLAPRKMRFGISEGMILSAGFDGGALALLDADAGAQPGMPVR.

Positions 12–22 (PYANGPLHLGH) match the 'HIGH' region motif. Zn(2+) contacts are provided by Cys143, Cys146, Cys156, and Cys159. A 'KMSKS' region motif is present at residues 330 to 334 (KMSKS). Residue Lys333 participates in ATP binding. The tRNA-binding domain occupies 593–696 (DFAKLDLRIG…AGAQPGMPVR (104 aa)).

The protein belongs to the class-I aminoacyl-tRNA synthetase family. MetG type 1 subfamily. Homodimer. Zn(2+) is required as a cofactor.

It is found in the cytoplasm. The catalysed reaction is tRNA(Met) + L-methionine + ATP = L-methionyl-tRNA(Met) + AMP + diphosphate. Functionally, is required not only for elongation of protein synthesis but also for the initiation of all mRNA translation through initiator tRNA(fMet) aminoacylation. In Xanthomonas campestris pv. campestris (strain 8004), this protein is Methionine--tRNA ligase.